Here is a 337-residue protein sequence, read N- to C-terminus: Glyceraldehyde-3-phosphate dehydrogenase (337 aa).

NAD(+) contacts are provided by residues 12-13, aspartate 34, and lysine 79; that span reads RI. D-glyceraldehyde 3-phosphate-binding positions include 150-152, threonine 181, 210-211, and arginine 233; these read SCT and TG. The active-site Nucleophile is the cysteine 151. Asparagine 315 is a binding site for NAD(+).

Belongs to the glyceraldehyde-3-phosphate dehydrogenase family. In terms of assembly, homotetramer.

The protein resides in the cytoplasm. It catalyses the reaction D-glyceraldehyde 3-phosphate + phosphate + NAD(+) = (2R)-3-phospho-glyceroyl phosphate + NADH + H(+). It participates in carbohydrate degradation; glycolysis; pyruvate from D-glyceraldehyde 3-phosphate: step 1/5. In Schizophyllum commune (Split gill fungus), this protein is Glyceraldehyde-3-phosphate dehydrogenase (GPD).